A 556-amino-acid chain; its full sequence is 2-succinyl-5-enolpyruvyl-6-hydroxy-3-cyclohexene-1-carboxylate synthase (556 aa).

The protein belongs to the TPP enzyme family. MenD subfamily. In terms of assembly, homodimer. Mg(2+) is required as a cofactor. The cofactor is Mn(2+). Requires thiamine diphosphate as cofactor.

It carries out the reaction isochorismate + 2-oxoglutarate + H(+) = 5-enolpyruvoyl-6-hydroxy-2-succinyl-cyclohex-3-ene-1-carboxylate + CO2. It participates in quinol/quinone metabolism; 1,4-dihydroxy-2-naphthoate biosynthesis; 1,4-dihydroxy-2-naphthoate from chorismate: step 2/7. The protein operates within quinol/quinone metabolism; menaquinone biosynthesis. Catalyzes the thiamine diphosphate-dependent decarboxylation of 2-oxoglutarate and the subsequent addition of the resulting succinic semialdehyde-thiamine pyrophosphate anion to isochorismate to yield 2-succinyl-5-enolpyruvyl-6-hydroxy-3-cyclohexene-1-carboxylate (SEPHCHC). The polypeptide is 2-succinyl-5-enolpyruvyl-6-hydroxy-3-cyclohexene-1-carboxylate synthase (Klebsiella pneumoniae (strain 342)).